The chain runs to 264 residues: Tryptophan synthase alpha chain (264 aa).

Catalysis depends on proton acceptor residues Glu-45 and Asp-56.

Belongs to the TrpA family. In terms of assembly, tetramer of two alpha and two beta chains.

The catalysed reaction is (1S,2R)-1-C-(indol-3-yl)glycerol 3-phosphate + L-serine = D-glyceraldehyde 3-phosphate + L-tryptophan + H2O. It functions in the pathway amino-acid biosynthesis; L-tryptophan biosynthesis; L-tryptophan from chorismate: step 5/5. Functionally, the alpha subunit is responsible for the aldol cleavage of indoleglycerol phosphate to indole and glyceraldehyde 3-phosphate. The sequence is that of Tryptophan synthase alpha chain from Leptospira borgpetersenii serovar Hardjo-bovis (strain JB197).